The sequence spans 236 residues: Leucyl/phenylalanyl-tRNA--protein transferase (236 aa).

The protein belongs to the L/F-transferase family.

Its subcellular location is the cytoplasm. The enzyme catalyses N-terminal L-lysyl-[protein] + L-leucyl-tRNA(Leu) = N-terminal L-leucyl-L-lysyl-[protein] + tRNA(Leu) + H(+). It catalyses the reaction N-terminal L-arginyl-[protein] + L-leucyl-tRNA(Leu) = N-terminal L-leucyl-L-arginyl-[protein] + tRNA(Leu) + H(+). The catalysed reaction is L-phenylalanyl-tRNA(Phe) + an N-terminal L-alpha-aminoacyl-[protein] = an N-terminal L-phenylalanyl-L-alpha-aminoacyl-[protein] + tRNA(Phe). Functionally, functions in the N-end rule pathway of protein degradation where it conjugates Leu, Phe and, less efficiently, Met from aminoacyl-tRNAs to the N-termini of proteins containing an N-terminal arginine or lysine. The chain is Leucyl/phenylalanyl-tRNA--protein transferase from Shewanella oneidensis (strain ATCC 700550 / JCM 31522 / CIP 106686 / LMG 19005 / NCIMB 14063 / MR-1).